A 41-amino-acid polypeptide reads, in one-letter code: Plantazolicin (41 aa).

A propeptide spanning residues 1-27 is cleaved from the precursor; the sequence is MTKITIPTALSAKVHGEGQHLFEPMAA. Arg28 carries the post-translational modification N2,N2-dimethylarginine; in form plantazolicin A. The thiazole-4-carboxylic acid (Arg-Cys) cross-link spans 28–29; that stretch reads RC. 2 cross-links (5-methyloxazole-4-carboxylic acid (Cys-Thr)) span residues 29–30 and 31–32; these read CT. Residues 30–31 constitute a cross-link (thiazole-4-carboxylic acid (Thr-Cys)); it reads TC. The segment at residues 32 to 33 is a cross-link (5-methyloxazole-4-carboxylic acid (Thr-Thr)); sequence TT. Residues 35 to 36 constitute a cross-link (oxazole-4-carboxylic acid (Ile-Ser)); sequence IS. 3 consecutive cross-links (oxazole-4-carboxylic acid (Ser-Ser)) follow at residues 36-37, 37-38, and 38-39; these read SS. The 5-methyloxazoline-4-carboxylic acid (Ser-Thr) cross-link spans 39–40; it reads ST.

In terms of processing, maturation of thiazole and oxazole containing antibiotics involves the enzymatic condensation of a Cys, Ser or Thr with the alpha-carbonyl of the preceding amino acid to form a thioether or ether bond, then dehydration to form a double bond with the alpha-amino nitrogen. Thiazoline or oxazoline ring are dehydrogenated to form thiazole or oxazole rings.

The protein localises to the secreted. It is found in the cell wall. Functionally, peptide antibiotic inhibiting growth of Gram-positive bacteria. The mode of action appears to be disruption of cell walls and lysis of cells. In Bacillus pumilus (strain ATCC 7061 / DSM 27 / CCUG 26015 / JCM 2508 / NBRC 12092 / NCIMB 9369 / NCTC 10337 / NRRL NRS-272 / CCM 2144), this protein is Plantazolicin.